The following is a 297-amino-acid chain: Inosose dehydratase (297 aa).

It belongs to the IolE/MocC family. Glutathione is required as a cofactor. Co(2+) serves as cofactor. Requires Mn(2+) as cofactor.

The enzyme catalyses scyllo-inosose = 3D-3,5/4-trihydroxycyclohexane-1,2-dione + H2O. It functions in the pathway polyol metabolism; myo-inositol degradation into acetyl-CoA; acetyl-CoA from myo-inositol: step 2/7. In terms of biological role, catalyzes the dehydration of inosose (2-keto-myo-inositol, 2KMI or 2,4,6/3,5-pentahydroxycyclohexanone) to 3D-(3,5/4)-trihydroxycyclohexane-1,2-dione (D-2,3-diketo-4-deoxy-epi-inositol). The polypeptide is Inosose dehydratase (Clostridium perfringens (strain 13 / Type A)).